The primary structure comprises 226 residues: Cytidylate kinase (226 aa).

Position 9 to 17 (G9 to T17) interacts with ATP.

It belongs to the cytidylate kinase family. Type 1 subfamily.

It is found in the cytoplasm. The enzyme catalyses CMP + ATP = CDP + ADP. It catalyses the reaction dCMP + ATP = dCDP + ADP. This is Cytidylate kinase from Clostridium tetani (strain Massachusetts / E88).